A 489-amino-acid chain; its full sequence is Glutamyl-tRNA(Gln) amidotransferase subunit A (489 aa).

Active-site charge relay system residues include Lys-80 and Ser-160. Ser-184 (acyl-ester intermediate) is an active-site residue.

It belongs to the amidase family. GatA subfamily. In terms of assembly, heterotrimer of A, B and C subunits.

It catalyses the reaction L-glutamyl-tRNA(Gln) + L-glutamine + ATP + H2O = L-glutaminyl-tRNA(Gln) + L-glutamate + ADP + phosphate + H(+). Functionally, allows the formation of correctly charged Gln-tRNA(Gln) through the transamidation of misacylated Glu-tRNA(Gln) in organisms which lack glutaminyl-tRNA synthetase. The reaction takes place in the presence of glutamine and ATP through an activated gamma-phospho-Glu-tRNA(Gln). This chain is Glutamyl-tRNA(Gln) amidotransferase subunit A, found in Wolbachia sp. subsp. Brugia malayi (strain TRS).